Reading from the N-terminus, the 144-residue chain is Large ribosomal subunit protein uL15 (144 aa).

The disordered stretch occupies residues 1–58 (MQLNDLRSAPGARREKLRPGRGIGSGLGKTGGRGHKGQTSRSGGKIAPGFEGGQQPLH). Over residues 21–31 (RGIGSGLGKTG) the composition is skewed to gly residues.

This sequence belongs to the universal ribosomal protein uL15 family. As to quaternary structure, part of the 50S ribosomal subunit.

Functionally, binds to the 23S rRNA. The polypeptide is Large ribosomal subunit protein uL15 (Azotobacter vinelandii (strain DJ / ATCC BAA-1303)).